Reading from the N-terminus, the 645-residue chain is Iron-regulated surface determinant protein B (645 aa).

Positions 1–40 are cleaved as a signal peptide; sequence MNKQQKEFKSFYSIRKSSLGVASVAISTLLLLMSNGEAQA. The YSIRK-G/S signaling motif signature appears at 12 to 23; it reads YSIRKSSLGVAS. Positions 38–53 are enriched in low complexity; that stretch reads AQAAAEETGGTNTEAQ. Positions 38 to 113 are disordered; sequence AQAAAEETGG…APKETKAVKP (76 aa). A compositionally biased stretch (basic and acidic residues) spans 84-110; that stretch reads KEVEAPTSETKEAKEVKEVKAPKETKA. 2 NEAT domains span residues 144 to 269 and 341 to 458; these read SAPN…KFKT and KMTD…TKAN. Residues M362 and Y440 each coordinate heme. Composition is skewed to basic and acidic residues over residues 458-476 and 489-534; these read NTDK…KKEA and VEKE…KGEV. Positions 458 to 619 are disordered; it reads NTDKSNKKEQ…LPQTGEESNK (162 aa). The segment covering 535-560 has biased composition (low complexity); sequence ESSSTTPTKVVSTTQNVAKPTTASSK. Polar residues predominate over residues 585–615; that stretch reads NIKNTNDGHTQSQNNKNTQENKAKSLPQTGE. The short motif at 610-614 is the LPXTG sorting signal element; it reads LPQTG. Residue T613 is modified to Pentaglycyl murein peptidoglycan amidated threonine. The propeptide at 614–645 is removed by sortase; the sequence is GEESNKDMTLPLMALLALSSIVAFVLPRKRKN.

Belongs to the IsdB family. In terms of assembly, interacts with host HBA; this interaction allows heme extraction as iron source. Interacts with IsdA.

The protein localises to the secreted. Its subcellular location is the cell wall. Functionally, cell wall-anchored surface receptor that extracts heme from oxidized metHb to enable growth on hemoglobin as a sole iron source. Rapidly extracts heme from hemoglobin and transfers it to IsdA or IsdC, which then relays it to the membrane transporter/IsdEF for internalization. Also promotes resistance to hydrogen peroxide and killing by neutrophils. This is Iron-regulated surface determinant protein B (isdB) from Staphylococcus aureus (strain Mu3 / ATCC 700698).